Consider the following 228-residue polypeptide: Ribonuclease 3 (228 aa).

In terms of domain architecture, RNase III spans 7–136 (LNKLKNEYNI…FNGALFLDQG (130 aa)). Glu49 serves as a coordination point for Mg(2+). Residue Asp53 is part of the active site. Residues Asp122 and Glu125 each coordinate Mg(2+). The active site involves Glu125. A DRBM domain is found at 162 to 228 (DYKTDLQELL…AAKAALQKFE (67 aa)). The interval 207–228 (GEGHNKKAAEQQAAKAALQKFE) is disordered. Residues 216–228 (EQQAAKAALQKFE) show a composition bias toward low complexity.

Belongs to the ribonuclease III family. As to quaternary structure, homodimer. Mg(2+) serves as cofactor.

It is found in the cytoplasm. It carries out the reaction Endonucleolytic cleavage to 5'-phosphomonoester.. In terms of biological role, digests double-stranded RNA. Involved in the processing of primary rRNA transcript to yield the immediate precursors to the large and small rRNAs (23S and 16S). Processes some mRNAs, and tRNAs when they are encoded in the rRNA operon. Processes pre-crRNA and tracrRNA of type II CRISPR loci if present in the organism. The protein is Ribonuclease 3 of Lactobacillus acidophilus (strain ATCC 700396 / NCK56 / N2 / NCFM).